We begin with the raw amino-acid sequence, 536 residues long: Probable cytochrome P450 520A1 (536 aa).

Residues Met-1 to Lys-21 form a helical membrane-spanning segment. Residue Cys-479 participates in heme binding.

This sequence belongs to the cytochrome P450 family. The cofactor is heme.

The protein localises to the membrane. The protein is Probable cytochrome P450 520A1 (cyp520A1) of Dictyostelium discoideum (Social amoeba).